The chain runs to 835 residues: MPLEMDQKVNKLTFGCQRSSTSDDDSGCAMEEYTWVPPGLRLEQVQLYFACLPEEKIPYVNSVGEKYRIKQLLYQLPPHDNEVRYCQSLSEEEKKELQMFSAQRKKEALGRGNIKMLSRAVMHATCEKCGEKINGGEVAIFVSRAGPGVCWHPSCFVCSTCNELLVDLIYFYQDGKIHCGRHHAELLKPRCSACDEIIFADECTEAEGRHWHMNHFCCYECETVLGGQRYIMKDGRPFCCGCFESHYAEYCESCGEHIGVDHAQMTYDGQHWHATETCFSCAQCKVSLLGCPFLPKKGRIYCCKACSLGEDVHASDSSDSAFQSARSRESRRSVRMGKSSRSADQCRQSLLLSPAVNYKFPGMFGNADDTLSRKMDDLSMSRQGAGFDNDTWKARDEQETAEDHEEWAEHDDYMTQLLLKFGEKGLFQQPPEDNRSNDHWMSENIKGKNDLQRNNRNQSLASKKYQSDMYWAQSQDGLGDSAYGSHPGPASSRKLQELDMDHGASGYMHEKMPWYKRSLECLSNNLKPQNENICDSMDSLALSNITGASVDAESKSRPSLFSYQNFQELNTRDFDKMSNMGTLNSSMLNRSTESLKSLNSEICQEKPPPEEKPMHTSALKRSKSQTRPQVKFSDDVIDNGDYSSIEIRRPPMSERSRRRVYNSEEQSQRPHHHHHHRRRKSRKSRSENALHLATDSKSSGKERKRSYTAEDYERLFHNKSAHEVQAYIQNADLFGQYSNAASNVGLPSQVVDKFLGLYGEDEDSWCSTCSSSSSDSEEEGYFLGQPIPKPRPQRYQYFSDDLCSPTNALSSSQFSQRTSKSKKKKGHKGKNCIIS.

Residues 14-122 (FGCQRSSTSD…NIKMLSRAVM (109 aa)) enclose the PET domain. 3 consecutive LIM zinc-binding domains span residues 124–188 (ATCE…ELLK), 189–249 (PRCS…HYAE), and 250–313 (YCES…EDVH). Disordered regions lie at residues 312–346 (VHASDSSDSAFQSARSRESRRSVRMGKSSRSADQC), 426–455 (LFQQPPEDNRSNDHWMSENIKGKNDLQRNN), 603–706 (CQEK…RKRS), and 769–835 (CSSS…CIIS). 3 stretches are compositionally biased toward basic and acidic residues: residues 432–453 (EDNRSNDHWMSENIKGKNDLQR), 603–614 (CQEKPPPEEKPM), and 646–655 (EIRRPPMSER). Composition is skewed to basic residues over residues 669–683 (RPHHHHHHRRRKSRK) and 819–835 (SKSKKKKGHKGKNCIIS). Position 832 is a cysteine methyl ester (C832). The S-farnesyl cysteine moiety is linked to residue C832. Positions 833–835 (IIS) are cleaved as a propeptide — removed in mature form.

The protein belongs to the prickle / espinas / testin family. In terms of assembly, interacts with dvl2/dsh and mapk8/jnk1. In terms of tissue distribution, expressed in the dorsal marginal zone of early gastrulae (stage 10). As gastrulation proceeds, expression expands to include the lateral and ventral marginal zones, excluding the few rows of cells above the blastopore lip. Expression moves dorsally with gastrulation cell movements, and by the end of gastrulation expression is seen in dorsal mesoderm and posterior but not anterior neural ectoderm. Expression becomes down-regulated in mesoderm but remains strong in posterior ectoderm through the neurula stages. During tailbud stages, expressed in the pronephric duct, tailbud, tailtip and forming somites. In the most posterior regions, expressed in notochord and in the floorplate of the neural tube with weak expression in the roofplate. At stage 30, expressed in a complex pattern in the head including strong expression in the lens and otic vesicle.

Its subcellular location is the cell membrane. In terms of biological role, acts in a planar cell polarity (PCP) complex; polarization along the apical/basal axis of epithelial cells. Regulates the polarized assembly of fibronectrin on the surface of the mesoderm during gastrulation. Essential for gastrulation cell movements, cooperating with dvl2/dsh to activate jnk. Acts together with tes to control axial elongation. The protein is Prickle-like protein 1-A (prickle1-a) of Xenopus laevis (African clawed frog).